The following is a 347-amino-acid chain: Ribosomal RNA small subunit methyltransferase C (347 aa).

The protein belongs to the methyltransferase superfamily. RsmC family. In terms of assembly, monomer.

The protein resides in the cytoplasm. It carries out the reaction guanosine(1207) in 16S rRNA + S-adenosyl-L-methionine = N(2)-methylguanosine(1207) in 16S rRNA + S-adenosyl-L-homocysteine + H(+). Specifically methylates the guanine in position 1207 of 16S rRNA in the 30S particle. The polypeptide is Ribosomal RNA small subunit methyltransferase C (Yersinia pseudotuberculosis serotype IB (strain PB1/+)).